Consider the following 426-residue polypeptide: Serine--tRNA ligase (426 aa).

233 to 235 (TAE) provides a ligand contact to L-serine. 264 to 266 (RSE) contacts ATP. Glu287 contributes to the L-serine binding site. ATP is bound at residue 351 to 354 (EISS). Ser387 provides a ligand contact to L-serine.

Belongs to the class-II aminoacyl-tRNA synthetase family. Type-1 seryl-tRNA synthetase subfamily. As to quaternary structure, homodimer. The tRNA molecule binds across the dimer.

It is found in the cytoplasm. The enzyme catalyses tRNA(Ser) + L-serine + ATP = L-seryl-tRNA(Ser) + AMP + diphosphate + H(+). It carries out the reaction tRNA(Sec) + L-serine + ATP = L-seryl-tRNA(Sec) + AMP + diphosphate + H(+). The protein operates within aminoacyl-tRNA biosynthesis; selenocysteinyl-tRNA(Sec) biosynthesis; L-seryl-tRNA(Sec) from L-serine and tRNA(Sec): step 1/1. Its function is as follows. Catalyzes the attachment of serine to tRNA(Ser). Is also able to aminoacylate tRNA(Sec) with serine, to form the misacylated tRNA L-seryl-tRNA(Sec), which will be further converted into selenocysteinyl-tRNA(Sec). This is Serine--tRNA ligase from Pseudomonas putida (strain GB-1).